Reading from the N-terminus, the 427-residue chain is tRNA(Ile)-lysidine synthase (427 aa).

An ATP-binding site is contributed by 25-30 (SGGLDS).

The protein belongs to the tRNA(Ile)-lysidine synthase family.

The protein resides in the cytoplasm. It catalyses the reaction cytidine(34) in tRNA(Ile2) + L-lysine + ATP = lysidine(34) in tRNA(Ile2) + AMP + diphosphate + H(+). Ligates lysine onto the cytidine present at position 34 of the AUA codon-specific tRNA(Ile) that contains the anticodon CAU, in an ATP-dependent manner. Cytidine is converted to lysidine, thus changing the amino acid specificity of the tRNA from methionine to isoleucine. This Histophilus somni (strain 2336) (Haemophilus somnus) protein is tRNA(Ile)-lysidine synthase.